The following is a 345-amino-acid chain: Serine/threonine-protein kinase US3 homolog (345 aa).

Residues 49–334 enclose the Protein kinase domain; it reads FSVLETFTPG…KALLDFAAFY (286 aa). Residues 55–63 and lysine 78 each bind ATP; that span reads FTPGAEGFT. The active-site Proton acceptor is the aspartate 162.

Belongs to the protein kinase superfamily. Ser/Thr protein kinase family. In terms of processing, phosphorylated by UL13 homolog; this phosphorylation regulates subsequent phosphorylation of UL31 and UL34 homologs by US3. Autophosphorylated.

It localises to the host cytoplasm. The protein localises to the host nucleus. The catalysed reaction is L-seryl-[protein] + ATP = O-phospho-L-seryl-[protein] + ADP + H(+). It catalyses the reaction L-threonyl-[protein] + ATP = O-phospho-L-threonyl-[protein] + ADP + H(+). Multifunctional serine/threonine kinase that plays a role in several processes including egress of virus particles from the nucleus, modulation of the actin cytoskeleton and inhibition of apoptosis. Phosphorylates UL31 and UL34 homologs, two critical regulators of capsid budding from nucleus to endoplasmic reticulum, thereby facilitating virion egress. Modulates and redistributes host components of the nuclear envelope, including LMNA, emerin/EMD and the nuclear matrix protein MATR3. Phosphorylates envelope glycoprotein B (gB), probably to direct it to the cell surface. Promotes virus intracellular spread by restructuring host cell cytoskeleton. Blocks host apoptosis to extend cell survival and allow efficient viral replication. Promotes viral gene expression by phosphorylating host HDAC2 to reduce viral genome silencing. The sequence is that of Serine/threonine-protein kinase US3 homolog (US2) from Chlorocebus aethiops (Green monkey).